The following is a 30-amino-acid chain: Cyclotide mden-G (30 aa).

A cross-link (cyclopeptide (Gly-Asn)) is located at residues glycine 1–asparagine 30. 3 disulfides stabilise this stretch: cysteine 4-cysteine 20, cysteine 8-cysteine 22, and cysteine 13-cysteine 27.

The protein belongs to the cyclotide family. Bracelet subfamily. In terms of processing, this is a cyclic peptide.

Probably participates in a plant defense mechanism. The chain is Cyclotide mden-G from Melicytus dentatus (Tree violet).